Here is a 506-residue protein sequence, read N- to C-terminus: MKEYQVYLERARSRQQDFLYPLIFREYIYGLAYSHNWNRSIFVENGGYDNKYSLLNVKRLITRMYQQNHLIISANDSNKNPFLGYNKNFYSKIISEGFAIVVEIPLFLQLSSSLEEAEIIKSYKNVRSIHSIFPFLEDKFTYLNYVSDIRIPYPIHLEILVQILRYWVKDAPFFHLLRLFLYHFCNWNRFITTKKSISTFSKSNPRLFLFLYNFYVCEYESIFLFLRNKSSHLRFKSFSVFLERIFFYAKREHLVEVFSKDFSYPLPFFKDPNIHYVRYQGKCILASKNVPFLMNKWKHYFIHLWQCFFDVWSQPRTININQLSEHSFQLLGYFSNVRLNRSVVRSQMLQNTFLIEIVSKKLDIIVPIIPLIRSLAKAKFCNVLGHPISKPVWADSSDFDIMERFLRICRNLSHYYNGSSKKKSLYRIKYILRLSCIKTLACKHKSTTRAFLKRSGSEELLEEFFTEEEEILSLIFPRDSFTLRRFYRNRIWYLDILFRNDLVNDE.

It belongs to the intron maturase 2 family. MatK subfamily.

It localises to the plastid. The protein localises to the chloroplast. Its function is as follows. Usually encoded in the trnK tRNA gene intron. Probably assists in splicing its own and other chloroplast group II introns. This Trifolium subterraneum (Subterranean clover) protein is Maturase K.